The following is a 578-amino-acid chain: Dapdiamide synthesis protein DdaD (578 aa).

One can recognise a Carrier domain in the interval 498–573 (ESISATEHQI…KMAAWLDASS (76 aa)). O-(pantetheine 4'-phosphoryl)serine is present on Ser533.

It belongs to the ATP-dependent AMP-binding enzyme family. The cofactor is pantetheine 4'-phosphate.

It functions in the pathway antibiotic biosynthesis. In terms of biological role, involved in dapdiamide antibiotics biosynthesis. Activates and sequesters N-beta-fumaramoyl-DAP as a covalently tethered thioester for subsequent oxidative modification of the fumaramoyl group. The protein is Dapdiamide synthesis protein DdaD of Enterobacter agglomerans (Erwinia herbicola).